The primary structure comprises 239 residues: Purine nucleoside phosphorylase DeoD-type (239 aa).

Histidine 5 is an a purine D-ribonucleoside binding site. Residues glycine 21, arginine 25, arginine 44, and 88-91 contribute to the phosphate site; that span reads RVGS. Residues 180-182 and 204-205 each bind a purine D-ribonucleoside; these read EME and SD. Aspartate 205 functions as the Proton donor in the catalytic mechanism.

It belongs to the PNP/UDP phosphorylase family. Homohexamer; trimer of homodimers.

The enzyme catalyses a purine D-ribonucleoside + phosphate = a purine nucleobase + alpha-D-ribose 1-phosphate. It carries out the reaction a purine 2'-deoxy-D-ribonucleoside + phosphate = a purine nucleobase + 2-deoxy-alpha-D-ribose 1-phosphate. Catalyzes the reversible phosphorolytic breakdown of the N-glycosidic bond in the beta-(deoxy)ribonucleoside molecules, with the formation of the corresponding free purine bases and pentose-1-phosphate. The chain is Purine nucleoside phosphorylase DeoD-type from Salmonella gallinarum (strain 287/91 / NCTC 13346).